A 143-amino-acid polypeptide reads, in one-letter code: Large ribosomal subunit protein uL13 (143 aa).

This sequence belongs to the universal ribosomal protein uL13 family. Part of the 50S ribosomal subunit.

In terms of biological role, this protein is one of the early assembly proteins of the 50S ribosomal subunit, although it is not seen to bind rRNA by itself. It is important during the early stages of 50S assembly. The sequence is that of Large ribosomal subunit protein uL13 from Symbiobacterium thermophilum (strain DSM 24528 / JCM 14929 / IAM 14863 / T).